Consider the following 109-residue polypeptide: Class I hydrophobin dewE (109 aa).

The first 20 residues, 1-20 (MKVATALSVLAVAGSALASA), serve as a signal peptide directing secretion. Intrachain disulfides connect cysteine 34–cysteine 87, cysteine 40–cysteine 81, cysteine 41–cysteine 74, and cysteine 88–cysteine 102.

This sequence belongs to the fungal hydrophobin family. In terms of assembly, self-assembles to form functional amyloid fibrils called rodlets. Self-assembly into fibrillar rodlets occurs spontaneously at hydrophobic:hydrophilic interfaces and the rodlets further associate laterally to form amphipathic monolayers.

It localises to the secreted. The protein resides in the spore wall. Its function is as follows. Aerial growth, conidiation, and dispersal of filamentous fungi in the environment rely upon a capability of their secreting small amphipathic proteins called hydrophobins (HPBs) with low sequence identity. Class I can self-assemble into an outermost layer of rodlet bundles on aerial cell surfaces, conferring cellular hydrophobicity that supports fungal growth, development and dispersal; whereas Class II form highly ordered films at water-air interfaces through intermolecular interactions but contribute nothing to the rodlet structure. DewE is a class I hydrophobin that contributes to the hydrophobicity of the spore surface. This Emericella nidulans (strain FGSC A4 / ATCC 38163 / CBS 112.46 / NRRL 194 / M139) (Aspergillus nidulans) protein is Class I hydrophobin dewE.